We begin with the raw amino-acid sequence, 92 residues long: Small ribosomal subunit protein uS19 (92 aa).

It belongs to the universal ribosomal protein uS19 family.

In terms of biological role, protein S19 forms a complex with S13 that binds strongly to the 16S ribosomal RNA. The protein is Small ribosomal subunit protein uS19 of Bradyrhizobium diazoefficiens (strain JCM 10833 / BCRC 13528 / IAM 13628 / NBRC 14792 / USDA 110).